Consider the following 224-residue polypeptide: Uracil-DNA glycosylase 2 (224 aa).

The active-site Proton acceptor is the aspartate 64.

This sequence belongs to the uracil-DNA glycosylase (UDG) superfamily. UNG family.

The protein resides in the cytoplasm. It catalyses the reaction Hydrolyzes single-stranded DNA or mismatched double-stranded DNA and polynucleotides, releasing free uracil.. Excises uracil residues from the DNA which can arise as a result of misincorporation of dUMP residues by DNA polymerase or due to deamination of cytosine. This Listeria monocytogenes serovar 1/2a (strain ATCC BAA-679 / EGD-e) protein is Uracil-DNA glycosylase 2.